The primary structure comprises 83 residues: Ardiscretin (83 aa).

An N-terminal signal peptide occupies residues 1-20 (MKGMIMLISCLMLIDVVVES). The region spanning 21–82 (KNGYIIEPKG…IFDYYNNKCG (62 aa)) is the LCN-type CS-alpha/beta domain. Cystine bridges form between Cys31–Cys81, Cys35–Cys57, Cys43–Cys62, and Cys47–Cys64. Cys81 carries the cysteine amide modification.

Expressed by the venom gland.

The protein resides in the secreted. Inhibits the sodium (Nav) currents in an apparent irreversible manner. Produces small depolarization and induces repetitive firing in squid axons. Is specific for arthropods (crickets, triatomides, crabs and squids), but is non-toxic to mice. Shows antibacterial activity against both Gram-positive and Gram-negative bacteria. The protein is Ardiscretin of Tityus discrepans (Venezuelan scorpion).